The sequence spans 44 residues: Photosystem I reaction center subunit IX (44 aa).

The chain crosses the membrane as a helical span at residues 7 to 27 (YLSVAPVLSTLWFGALAGLLI).

The protein belongs to the PsaJ family.

The protein resides in the plastid. The protein localises to the chloroplast thylakoid membrane. May help in the organization of the PsaE and PsaF subunits. This chain is Photosystem I reaction center subunit IX, found in Eucalyptus globulus subsp. globulus (Tasmanian blue gum).